Here is an 87-residue protein sequence, read N- to C-terminus: MSSLSTSDLASLDDTSKKEIATFLEGENSKQKVQMSIHQFTNICFKKCVESVNDSNLSSQEEQCLSNCVNRFLDTNIRIVNGLQNTR.

Positions 44-68 match the Twin CX3C motif motif; that stretch reads CFKKCVESVNDSNLSSQEEQCLSNC. Disulfide bonds link Cys44/Cys68 and Cys48/Cys64.

The protein belongs to the small Tim family. As to quaternary structure, heterohexamer; composed of 3 copies of TIM8 and 3 copies of TIM13, named soluble 70 kDa complex. Associates with the TIM22 complex, whose core is composed of TIM18, TIM22 and TIM54. Interacts with the transmembrane regions of multi-pass transmembrane proteins in transit.

The protein localises to the mitochondrion inner membrane. It is found in the mitochondrion intermembrane space. Mitochondrial intermembrane chaperone that participates in the import and insertion of some multi-pass transmembrane proteins into the mitochondrial inner membrane. Also required for the transfer of beta-barrel precursors from the TOM complex to the sorting and assembly machinery (SAM complex) of the outer membrane. Acts as a chaperone-like protein that protects the hydrophobic precursors from aggregation and guide them through the mitochondrial intermembrane space. The TIM8-TIM13 complex is non essential and only mediates the import of few proteins under precise conditions, while the predominant TIM9-TIM10 70 kDa complex is crucial and mediates the import of much more proteins. Strictly required for import of TIM23 in some conditions, when a low membrane potential exists in the mitochondria. The sequence is that of Mitochondrial import inner membrane translocase subunit TIM8 (TIM8) from Saccharomyces cerevisiae (strain ATCC 204508 / S288c) (Baker's yeast).